The chain runs to 154 residues: Endoribonuclease YbeY (154 aa).

Residues His113, His117, and His123 each coordinate Zn(2+).

It belongs to the endoribonuclease YbeY family. Zn(2+) serves as cofactor.

It is found in the cytoplasm. Its function is as follows. Single strand-specific metallo-endoribonuclease involved in late-stage 70S ribosome quality control and in maturation of the 3' terminus of the 16S rRNA. This chain is Endoribonuclease YbeY, found in Ehrlichia canis (strain Jake).